The sequence spans 430 residues: DD-carboxypeptidase/endopeptidase Mpg (430 aa).

Histidine 295, aspartate 299, and histidine 375 together coordinate Zn(2+).

Belongs to the peptidase M23B family. In terms of assembly, monomer. Zn(2+) is required as a cofactor. In terms of processing, likely to be synthesized as a proenzyme. The cleavage of the N-terminal domain is probably required for the activation of the enzyme.

The protein localises to the cell outer membrane. Has both endopeptidase and DD-carboxypeptidase activities. Degrades cell wall peptidoglycan (PG) to allow consummate expression of pili. The polypeptide is DD-carboxypeptidase/endopeptidase Mpg (Neisseria meningitidis serogroup B (strain ATCC BAA-335 / MC58)).